The following is a 235-amino-acid chain: Ribonuclease 3 (235 aa).

One can recognise an RNase III domain in the interval 6 to 131 (IDQLFKLTGH…LIAVMYLDGG (126 aa)). Glu44 is a binding site for Mg(2+). Residue Asp48 is part of the active site. 2 residues coordinate Mg(2+): Asp117 and Glu120. Glu120 is a catalytic residue. In terms of domain architecture, DRBM spans 156–225 (DAKTELQEWA…AEKILRREGV (70 aa)).

Belongs to the ribonuclease III family. Homodimer. Mg(2+) serves as cofactor.

It localises to the cytoplasm. The enzyme catalyses Endonucleolytic cleavage to 5'-phosphomonoester.. Functionally, digests double-stranded RNA. Involved in the processing of primary rRNA transcript to yield the immediate precursors to the large and small rRNAs (23S and 16S). Processes some mRNAs, and tRNAs when they are encoded in the rRNA operon. Processes pre-crRNA and tracrRNA of type II CRISPR loci if present in the organism. The chain is Ribonuclease 3 from Bartonella tribocorum (strain CIP 105476 / IBS 506).